The chain runs to 129 residues: Prefoldin subunit alpha (129 aa).

The protein belongs to the prefoldin alpha subunit family. In terms of assembly, heterohexamer of two alpha and four beta subunits.

Its subcellular location is the cytoplasm. Molecular chaperone capable of stabilizing a range of proteins. Seems to fulfill an ATP-independent, HSP70-like function in archaeal de novo protein folding. The polypeptide is Prefoldin subunit alpha (Thermofilum pendens (strain DSM 2475 / Hrk 5)).